The sequence spans 436 residues: Testican-3 (436 aa).

An N-terminal signal peptide occupies residues 1–21 (MLKVSAVLCVCAAAWCSQSLA). Disulfide bonds link cysteine 90/cysteine 101, cysteine 95/cysteine 111, cysteine 139/cysteine 169, cysteine 142/cysteine 162, cysteine 151/cysteine 183, cysteine 317/cysteine 341, cysteine 352/cysteine 359, and cysteine 361/cysteine 380. The region spanning 133-185 (GPILSTCKQCPVVYPSPVCGSDGHTYSFQCKLEYQACVLGKQISVKCEGHCPC) is the Kazal-like domain. The 67-residue stretch at 314-380 (DPPCQTELSN…GSRINGVADC (67 aa)) folds into the Thyroglobulin type-1 domain. 2 O-linked (Xyl...) (glycosaminoglycan) serine glycosylation sites follow: serine 387 and serine 392. The disordered stretch occupies residues 393–436 (GDFHEWTDDEDDEDDIMNDEDEIEDDDEDEGDDDDGGDDHDVYI). Positions 399 to 430 (TDDEDDEDDIMNDEDEIEDDDEDEGDDDDGGD) are enriched in acidic residues.

Post-translationally, contains chondroitin sulfate and heparan sulfate O-linked oligosaccharides. As to expression, expressed in brain.

It localises to the secreted. Its subcellular location is the extracellular space. It is found in the extracellular matrix. May participate in diverse steps of neurogenesis. Inhibits the processing of pro-matrix metalloproteinase 2 (MMP-2) by MT1-MMP and MT3-MMP. May interfere with tumor invasion. This Homo sapiens (Human) protein is Testican-3 (SPOCK3).